The sequence spans 564 residues: Proline--tRNA ligase (564 aa).

This sequence belongs to the class-II aminoacyl-tRNA synthetase family. ProS type 1 subfamily. Homodimer.

The protein localises to the cytoplasm. The enzyme catalyses tRNA(Pro) + L-proline + ATP = L-prolyl-tRNA(Pro) + AMP + diphosphate. Functionally, catalyzes the attachment of proline to tRNA(Pro) in a two-step reaction: proline is first activated by ATP to form Pro-AMP and then transferred to the acceptor end of tRNA(Pro). As ProRS can inadvertently accommodate and process non-cognate amino acids such as alanine and cysteine, to avoid such errors it has two additional distinct editing activities against alanine. One activity is designated as 'pretransfer' editing and involves the tRNA(Pro)-independent hydrolysis of activated Ala-AMP. The other activity is designated 'posttransfer' editing and involves deacylation of mischarged Ala-tRNA(Pro). The misacylated Cys-tRNA(Pro) is not edited by ProRS. The polypeptide is Proline--tRNA ligase (Bacillus subtilis (strain 168)).